The primary structure comprises 176 residues: RNA 2',3'-cyclic phosphodiesterase (176 aa).

Residue H39 is the Proton donor of the active site. 2 consecutive short sequence motifs (HXTX) follow at residues 39-42 and 122-125; these read HITL and HLTV. The active-site Proton acceptor is the H122.

Belongs to the 2H phosphoesterase superfamily. ThpR family.

The enzyme catalyses a 3'-end 2',3'-cyclophospho-ribonucleotide-RNA + H2O = a 3'-end 2'-phospho-ribonucleotide-RNA + H(+). In terms of biological role, hydrolyzes RNA 2',3'-cyclic phosphodiester to an RNA 2'-phosphomonoester. The polypeptide is RNA 2',3'-cyclic phosphodiesterase (Archaeoglobus fulgidus (strain ATCC 49558 / DSM 4304 / JCM 9628 / NBRC 100126 / VC-16)).